We begin with the raw amino-acid sequence, 179 residues long: Large ribosomal subunit protein uL6 (179 aa).

The protein belongs to the universal ribosomal protein uL6 family. In terms of assembly, part of the 50S ribosomal subunit.

This protein binds to the 23S rRNA, and is important in its secondary structure. It is located near the subunit interface in the base of the L7/L12 stalk, and near the tRNA binding site of the peptidyltransferase center. The protein is Large ribosomal subunit protein uL6 of Geotalea uraniireducens (strain Rf4) (Geobacter uraniireducens).